A 93-amino-acid chain; its full sequence is Large ribosomal subunit protein uL23 (93 aa).

Belongs to the universal ribosomal protein uL23 family. Part of the 50S ribosomal subunit. Contacts protein L29, and trigger factor when it is bound to the ribosome.

In terms of biological role, one of the early assembly proteins it binds 23S rRNA. One of the proteins that surrounds the polypeptide exit tunnel on the outside of the ribosome. Forms the main docking site for trigger factor binding to the ribosome. In Aliarcobacter butzleri (strain RM4018) (Arcobacter butzleri), this protein is Large ribosomal subunit protein uL23.